The sequence spans 362 residues: Peptide chain release factor 1 (362 aa).

An N5-methylglutamine modification is found at Gln237.

The protein belongs to the prokaryotic/mitochondrial release factor family. In terms of processing, methylated by PrmC. Methylation increases the termination efficiency of RF1.

It is found in the cytoplasm. In terms of biological role, peptide chain release factor 1 directs the termination of translation in response to the peptide chain termination codons UAG and UAA. This Aliivibrio salmonicida (strain LFI1238) (Vibrio salmonicida (strain LFI1238)) protein is Peptide chain release factor 1.